Consider the following 486-residue polypeptide: Arginine/agmatine antiporter (486 aa).

The next 12 membrane-spanning stretches (helical) occupy residues 12–32, 41–61, 85–105, 132–152, 160–180, 211–231, 242–262, 296–316, 341–361, 367–387, 418–438, and 461–481; these read LGAIALAGMVISSMIGGGIFS, AGVGAIILAWILTGVGMFFIA, GFGPYIGFTIGWGYWLCQIFG, PAILGGSILIWVFNFIVLKGI, IIGTVGKLVPLIVFIIITAFL, STMLVTLWAFIGIEGAVVMSA, ATILGFTGCLTVYILLSILPF, VGLLIAVLSSWLSWTMIVAEI, VSLYVTSALMQIAMLLVYFST, MLSITGVMVLPAYFASAAFLV, IWLIYAGGLKYLLMAIILLAL, and EVTEITIIAFLALLAIFLFST.

The protein belongs to the amino acid-polyamine-organocation (APC) superfamily. Basic amino acid/polyamine antiporter (APA) (TC 2.A.3.2) family.

It localises to the cell inner membrane. Functionally, catalyzes the exchange of L-arginine for agmatine. The arginine uptake by the bacterium in the macrophage may be a virulence factor against the host innate immune response. The sequence is that of Arginine/agmatine antiporter (aaxC) from Chlamydia abortus (strain DSM 27085 / S26/3) (Chlamydophila abortus).